Reading from the N-terminus, the 350-residue chain is DNA primase small subunit PriS (350 aa).

Catalysis depends on residues Asp-97, Asp-99, and Asp-251.

The protein belongs to the eukaryotic-type primase small subunit family. Heterodimer of a small subunit (PriS) and a large subunit (PriL). The cofactor is Mg(2+). Mn(2+) is required as a cofactor. Requires Zn(2+) as cofactor.

Catalytic subunit of DNA primase, an RNA polymerase that catalyzes the synthesis of short RNA molecules used as primers for DNA polymerase during DNA replication. The small subunit contains the primase catalytic core and has DNA synthesis activity on its own. Binding to the large subunit stabilizes and modulates the activity, increasing the rate of DNA synthesis while decreasing the length of the DNA fragments, and conferring RNA synthesis capability. The DNA polymerase activity may enable DNA primase to also catalyze primer extension after primer synthesis. May also play a role in DNA repair. This Methanocaldococcus jannaschii (strain ATCC 43067 / DSM 2661 / JAL-1 / JCM 10045 / NBRC 100440) (Methanococcus jannaschii) protein is DNA primase small subunit PriS.